Here is a 467-residue protein sequence, read N- to C-terminus: MSDDTTQIEPAMAQETSPRANTRKVFVKTYGCQMNVYDSQRMADSLAAEGYVATDTPDDADLVLLNTCHIREKASEKLYSALGRLRKMKDARAADGKELTIGVAGCVAQAEGQEILRRAPNVDLVIGPQTYHRLPNALARVRGGEKVVETDYAIEDKFEHLPAPRREETRKRGVSAFLTVQEGCDKFCTFCVVPYTRGSEVSRSVKQIVAEAERLADSGVRELTLLGQNVNAWHGEGEDGREWGLGELLFRLARIPGIARLRYTTSHPRDMDDSLIAAHRDLRQLMPYLHLPVQSGSDRILKAMNRRHKADEYLRLIERIRNVRPDMALSGDFIVGFPGETDQDFEDTMQLVRDVNYAQAYSFKYSPRLGTPGADLDDHVEEAVKDERLQRLQALLSAQQYAFQDSMIGRKMDVLLEKPGREAGQMVGRSPWLLPVIIDDNKDRVGDIIHVKIVSTGTNSLIAQKLA.

Residues 1–20 (MSDDTTQIEPAMAQETSPRA) form a disordered region. One can recognise an MTTase N-terminal domain in the interval 23–143 (RKVFVKTYGC…LPNALARVRG (121 aa)). [4Fe-4S] cluster-binding residues include Cys32, Cys68, Cys106, Cys184, Cys188, and Cys191. The Radical SAM core domain occupies 170–402 (RKRGVSAFLT…QALLSAQQYA (233 aa)). In terms of domain architecture, TRAM spans 405–467 (DSMIGRKMDV…TNSLIAQKLA (63 aa)).

This sequence belongs to the methylthiotransferase family. MiaB subfamily. Monomer. [4Fe-4S] cluster is required as a cofactor.

It localises to the cytoplasm. It carries out the reaction N(6)-dimethylallyladenosine(37) in tRNA + (sulfur carrier)-SH + AH2 + 2 S-adenosyl-L-methionine = 2-methylsulfanyl-N(6)-dimethylallyladenosine(37) in tRNA + (sulfur carrier)-H + 5'-deoxyadenosine + L-methionine + A + S-adenosyl-L-homocysteine + 2 H(+). In terms of biological role, catalyzes the methylthiolation of N6-(dimethylallyl)adenosine (i(6)A), leading to the formation of 2-methylthio-N6-(dimethylallyl)adenosine (ms(2)i(6)A) at position 37 in tRNAs that read codons beginning with uridine. This Brucella suis (strain ATCC 23445 / NCTC 10510) protein is tRNA-2-methylthio-N(6)-dimethylallyladenosine synthase.